We begin with the raw amino-acid sequence, 173 residues long: Ribosome maturation factor RimM (173 aa).

A PRC barrel domain is found at 96 to 169; it reads PDEYYDHQLE…LVEIDPPEGL (74 aa).

This sequence belongs to the RimM family. As to quaternary structure, binds ribosomal protein uS19.

It is found in the cytoplasm. An accessory protein needed during the final step in the assembly of 30S ribosomal subunit, possibly for assembly of the head region. Essential for efficient processing of 16S rRNA. May be needed both before and after RbfA during the maturation of 16S rRNA. It has affinity for free ribosomal 30S subunits but not for 70S ribosomes. This chain is Ribosome maturation factor RimM, found in Mycobacterium sp. (strain JLS).